We begin with the raw amino-acid sequence, 92 residues long: Small ribosomal subunit protein bS20 (92 aa).

The segment at 1–23 is disordered; it reads MANTPSAKKRAKQAEKRRSHNAS. The span at 7–20 shows a compositional bias: basic residues; sequence AKKRAKQAEKRRSH.

Belongs to the bacterial ribosomal protein bS20 family.

Its function is as follows. Binds directly to 16S ribosomal RNA. This is Small ribosomal subunit protein bS20 from Pseudomonas fluorescens (strain SBW25).